The following is a 165-amino-acid chain: Transcription factor E (165 aa).

The HTH TFE/IIEalpha-type domain occupies 5–87 (NDPVVRGYLL…LWQLDLSDIE (83 aa)).

This sequence belongs to the TFE family. As to quaternary structure, monomer. Interaction with RNA polymerase subunits RpoF and RpoE is necessary for Tfe stimulatory transcription activity. Able to interact with Tbp and RNA polymerase in the absence of DNA promoter. Interacts both with the preinitiation and elongation complexes.

Functionally, transcription factor that plays a role in the activation of archaeal genes transcribed by RNA polymerase. Facilitates transcription initiation by enhancing TATA-box recognition by TATA-box-binding protein (Tbp), and transcription factor B (Tfb) and RNA polymerase recruitment. Not absolutely required for transcription in vitro, but particularly important in cases where Tbp or Tfb function is not optimal. It dynamically alters the nucleic acid-binding properties of RNA polymerases by stabilizing the initiation complex and destabilizing elongation complexes. Seems to translocate with the RNA polymerase following initiation and acts by binding to the non template strand of the transcription bubble in elongation complexes. The protein is Transcription factor E of Methanococcoides burtonii (strain DSM 6242 / NBRC 107633 / OCM 468 / ACE-M).